The primary structure comprises 645 residues: Threonine--tRNA ligase (645 aa).

The 63-residue stretch at 1-63 (MNQINIQFPD…EQDGAIEIIT (63 aa)) folds into the TGS domain. The interval 242-540 (DHRKIGKDLE…LTEETKGAFP (299 aa)) is catalytic. Zn(2+) contacts are provided by Cys336, His387, and His517.

It belongs to the class-II aminoacyl-tRNA synthetase family. Homodimer. It depends on Zn(2+) as a cofactor.

Its subcellular location is the cytoplasm. The catalysed reaction is tRNA(Thr) + L-threonine + ATP = L-threonyl-tRNA(Thr) + AMP + diphosphate + H(+). In terms of biological role, catalyzes the attachment of threonine to tRNA(Thr) in a two-step reaction: L-threonine is first activated by ATP to form Thr-AMP and then transferred to the acceptor end of tRNA(Thr). Also edits incorrectly charged L-seryl-tRNA(Thr). The chain is Threonine--tRNA ligase from Staphylococcus epidermidis (strain ATCC 35984 / DSM 28319 / BCRC 17069 / CCUG 31568 / BM 3577 / RP62A).